A 246-amino-acid polypeptide reads, in one-letter code: Small ribosomal subunit protein uS2 (246 aa).

It belongs to the universal ribosomal protein uS2 family.

The polypeptide is Small ribosomal subunit protein uS2 (Dictyoglomus turgidum (strain DSM 6724 / Z-1310)).